The primary structure comprises 114 residues: TYRO protein tyrosine kinase-binding protein (114 aa).

Residues 1–21 form the signal peptide; that stretch reads MGALEPSWCLLFLPVLLTVGG. Topologically, residues 22–42 are extracellular; the sequence is LSPVQAQSDTFPRCDCSSVSP. Residues 43–63 traverse the membrane as a helical segment; that stretch reads GVLAGIVLGDLVLTLLIALAV. Asp-52 serves as a coordination point for Ca(2+). Over 64–114 the chain is Cytoplasmic; sequence YSLGRLVSRGQGTAEGTRKQHIAETESPYQELQGQRPEVYSDLNTQRQYYR. The disordered stretch occupies residues 74–107; that stretch reads QGTAEGTRKQHIAETESPYQELQGQRPEVYSDLN. Residues 81 to 109 form the ITAM domain; it reads RKQHIAETESPYQELQGQRPEVYSDLNTQ. Phosphotyrosine is present on residues Tyr-92 and Tyr-103.

It belongs to the TYROBP family. Homodimer; disulfide-linked. Homotrimer; disulfide-linked. Homotetramer; disulfide-linked. Homotrimers and homotetramers form when low levels of partner receptors are available and are competitive with assembly with interacting receptors. They may represent alternative oligomerization states or may be intermediates in the receptor assembly process. Binding of a metal cation aids in homooligomerization through coordination of the metal ion by the subunits of the oligomer. Interacts with TREM1. Interacts with TREM2. Interacts with TREM3. Interacts with CLECSF5. Interacts with CD300LB and CD300C2. Interacts with CD300E. Interacts (via ITAM domain) with SYK (via SH2 domains); activates SYK mediating neutrophil and macrophage integrin-mediated activation. Interacts (via transmembrane domain) with KLRK1 isoform 2 (via transmembrane domain); the interaction is required for KLRK1 NK cell surface expression and NK cell-mediated cytotoxicity. Interacts with KLRC2. Interacts with CD300H. Interacts with KLRD1. Interacts with KLRA4 and KLRA8. Tyrosine phosphorylated. Following ligand binding by associated receptors, tyrosine phosphorylated in the ITAM domain which leads to activation of additional tyrosine kinases and subsequent cell activation. As to expression, expressed on microglia (at protein level). Expressed on oligodendrocytes (at protein level). Expressed on macrophages and osteoclasts. Expressed on dendritic cells in liver, spleen, kidney and lung with highest levels in liver dendritic cells.

It is found in the cell membrane. Its function is as follows. Adapter protein which non-covalently associates with activating receptors found on the surface of a variety of immune cells to mediate signaling and cell activation following ligand binding by the receptors. TYROBP is tyrosine-phosphorylated in the ITAM domain following ligand binding by the associated receptors which leads to activation of additional tyrosine kinases and subsequent cell activation. Also has an inhibitory role in some cells. Non-covalently associates with activating receptors of the CD300 family to mediate cell activation. Also mediates cell activation through association with activating receptors of the CD200R family. Required for neutrophil activation mediated by integrin. Required for the activation of myeloid cells mediated by the CLEC5A/MDL1 receptor. Associates with natural killer (NK) cell receptors such as the KLRD1/KLRC2 heterodimer to mediate NK cell activation. Also associates non-covalently with the NK cell receptors KLRA4/LY49D and KLRA8/LY49H which leads to NK cell activation. Associates with TREM1 to mediate activation of neutrophils and monocytes. Associates with TREM2 on monocyte-derived dendritic cells to mediate up-regulation of chemokine receptor CCR7 and dendritic cell maturation and survival. Association with TREM2 mediates cytokine-induced formation of multinucleated giant cells which are formed by the fusion of macrophages. Stabilizes the TREM2 C-terminal fragment (TREM2-CTF) which is produced by TREM2 ectodomain shedding. In microglia, required with TREM2 for phagocytosis of apoptotic neurons. Required with ITGAM/CD11B in microglia to control production of microglial superoxide ions which promote the neuronal apoptosis that occurs during brain development. Promotes pro-inflammatory responses in microglia following nerve injury which accelerates degeneration of injured neurons. Positively regulates the expression of the IRAK3/IRAK-M kinase and IL10 production by liver dendritic cells and inhibits their T cell allostimulatory ability. Negatively regulates B cell proliferation. Required for CSF1-mediated osteoclast cytoskeletal organization. Positively regulates multinucleation during osteoclast development. This chain is TYRO protein tyrosine kinase-binding protein, found in Mus musculus (Mouse).